The primary structure comprises 417 residues: Hydroxysteroid dehydrogenase-like protein 2 (417 aa).

Residues 17–23 (GASRGIG), lysine 42, and aspartate 74 contribute to the NADP(+) site. Residue tyrosine 168 is the Proton acceptor of the active site. NADP(+) is bound at residue lysine 172. The 109-residue stretch at 306–414 (ASPLQETFKA…KLEKILGQMN (109 aa)) folds into the SCP2 domain.

Belongs to the short-chain dehydrogenases/reductases (SDR) family.

The protein resides in the peroxisome. It is found in the mitochondrion. Has apparently no steroid dehydrogenase activity. Might act as a metabolic regulator that affects systemic adaptation to nutritional cues. This is Hydroxysteroid dehydrogenase-like protein 2 (hsdl2) from Xenopus laevis (African clawed frog).